We begin with the raw amino-acid sequence, 193 residues long: ATP synthase subunit b 1 (193 aa).

Residues 13-32 (PAVTGGDTHSGTGVPAEAHG) form a disordered region. A helical membrane pass occupies residues 40-60 (ATFPSQLLWLAITFGLFYLFL).

It belongs to the ATPase B chain family. As to quaternary structure, F-type ATPases have 2 components, F(1) - the catalytic core - and F(0) - the membrane proton channel. F(1) has five subunits: alpha(3), beta(3), gamma(1), delta(1), epsilon(1). F(0) has three main subunits: a(1), b(2) and c(10-14). The alpha and beta chains form an alternating ring which encloses part of the gamma chain. F(1) is attached to F(0) by a central stalk formed by the gamma and epsilon chains, while a peripheral stalk is formed by the delta and b chains.

Its subcellular location is the cell inner membrane. In terms of biological role, f(1)F(0) ATP synthase produces ATP from ADP in the presence of a proton or sodium gradient. F-type ATPases consist of two structural domains, F(1) containing the extramembraneous catalytic core and F(0) containing the membrane proton channel, linked together by a central stalk and a peripheral stalk. During catalysis, ATP synthesis in the catalytic domain of F(1) is coupled via a rotary mechanism of the central stalk subunits to proton translocation. Component of the F(0) channel, it forms part of the peripheral stalk, linking F(1) to F(0). The protein is ATP synthase subunit b 1 of Mesorhizobium japonicum (strain LMG 29417 / CECT 9101 / MAFF 303099) (Mesorhizobium loti (strain MAFF 303099)).